Consider the following 255-residue polypeptide: 5-oxoprolinase subunit A (255 aa).

It belongs to the LamB/PxpA family. In terms of assembly, forms a complex composed of PxpA, PxpB and PxpC.

The enzyme catalyses 5-oxo-L-proline + ATP + 2 H2O = L-glutamate + ADP + phosphate + H(+). Its function is as follows. Catalyzes the cleavage of 5-oxoproline to form L-glutamate coupled to the hydrolysis of ATP to ADP and inorganic phosphate. In Pyrococcus horikoshii (strain ATCC 700860 / DSM 12428 / JCM 9974 / NBRC 100139 / OT-3), this protein is 5-oxoprolinase subunit A.